Here is a 36-residue protein sequence, read N- to C-terminus: Photosystem I reaction center subunit VIII (36 aa).

The helical transmembrane segment at 8–28 (SIFVPLVGLVFPAIAMASLFL) threads the bilayer.

The protein belongs to the PsaI family.

The protein localises to the plastid. The protein resides in the chloroplast thylakoid membrane. May help in the organization of the PsaL subunit. The chain is Photosystem I reaction center subunit VIII from Solanum bulbocastanum (Wild potato).